The following is a 151-amino-acid chain: Cell division control protein 2 homolog 2 (151 aa).

The region spanning 1 to 151 (ALKEIRMDNE…IMQTLQIESL (151 aa)) is the Protein kinase domain. Lys3 is an ATP binding site. Residue Asp113 is the Proton acceptor of the active site.

It belongs to the protein kinase superfamily. CMGC Ser/Thr protein kinase family. CDC2/CDKX subfamily.

The enzyme catalyses L-seryl-[protein] + ATP = O-phospho-L-seryl-[protein] + ADP + H(+). It carries out the reaction L-threonyl-[protein] + ATP = O-phospho-L-threonyl-[protein] + ADP + H(+). The catalysed reaction is [DNA-directed RNA polymerase] + ATP = phospho-[DNA-directed RNA polymerase] + ADP + H(+). This Pisum sativum (Garden pea) protein is Cell division control protein 2 homolog 2.